Reading from the N-terminus, the 506-residue chain is UDP-N-acetylmuramoylalanine--D-glutamate ligase (506 aa).

Gly-128 to Thr-134 contributes to the ATP binding site.

The protein belongs to the MurCDEF family.

The protein localises to the cytoplasm. It catalyses the reaction UDP-N-acetyl-alpha-D-muramoyl-L-alanine + D-glutamate + ATP = UDP-N-acetyl-alpha-D-muramoyl-L-alanyl-D-glutamate + ADP + phosphate + H(+). It functions in the pathway cell wall biogenesis; peptidoglycan biosynthesis. In terms of biological role, cell wall formation. Catalyzes the addition of glutamate to the nucleotide precursor UDP-N-acetylmuramoyl-L-alanine (UMA). This is UDP-N-acetylmuramoylalanine--D-glutamate ligase from Albidiferax ferrireducens (strain ATCC BAA-621 / DSM 15236 / T118) (Rhodoferax ferrireducens).